An 83-amino-acid chain; its full sequence is MDSADPQLARFLHQLQAETQRQKFTEQVHTLTGRCWDVCFSDYRPPSKMDGKTQTCIQNCVNRMIDASNFMVEHLSKMNGGSA.

The short motif at 35–60 (CWDVCFSDYRPPSKMDGKTQTCIQNC) is the Twin CX3C motif element. 2 disulfide bridges follow: Cys-35–Cys-60 and Cys-39–Cys-56.

This sequence belongs to the small Tim family. As to quaternary structure, heterohexamer; composed of 3 copies of ddp-1/tim-8 and 3 copies of tin-13/tim-13, named soluble 70 kDa complex. Associates with the TIM22 complex, whose core is composed of tim-22.

It localises to the mitochondrion inner membrane. In terms of biological role, mitochondrial intermembrane chaperone that participates in the import and insertion of some multi-pass transmembrane proteins into the mitochondrial inner membrane. Also required for the transfer of beta-barrel precursors from the TOM complex to the sorting and assembly machinery (SAM complex) of the outer membrane. Acts as a chaperone-like protein that protects the hydrophobic precursors from aggregation and guide them through the mitochondrial intermembrane space. The ddp-1/tim-8-tim-13 complex mediates the import of some proteins while the predominant tim-9/tin-9.1-tim-10/tin-10 70 kDa complex mediates the import of much more proteins. The sequence is that of Mitochondrial import inner membrane translocase subunit Tim8 from Caenorhabditis briggsae.